We begin with the raw amino-acid sequence, 284 residues long: Ribosomal RNA small subunit methyltransferase A (284 aa).

6 residues coordinate S-adenosyl-L-methionine: N26, L28, G53, E74, D97, and N127.

The protein belongs to the class I-like SAM-binding methyltransferase superfamily. rRNA adenine N(6)-methyltransferase family. RsmA subfamily.

Its subcellular location is the cytoplasm. It catalyses the reaction adenosine(1518)/adenosine(1519) in 16S rRNA + 4 S-adenosyl-L-methionine = N(6)-dimethyladenosine(1518)/N(6)-dimethyladenosine(1519) in 16S rRNA + 4 S-adenosyl-L-homocysteine + 4 H(+). In terms of biological role, specifically dimethylates two adjacent adenosines (A1518 and A1519) in the loop of a conserved hairpin near the 3'-end of 16S rRNA in the 30S particle. May play a critical role in biogenesis of 30S subunits. This Anaeromyxobacter dehalogenans (strain 2CP-1 / ATCC BAA-258) protein is Ribosomal RNA small subunit methyltransferase A.